The chain runs to 116 residues: Large ribosomal subunit protein bL19 (116 aa).

The protein belongs to the bacterial ribosomal protein bL19 family.

Its function is as follows. This protein is located at the 30S-50S ribosomal subunit interface and may play a role in the structure and function of the aminoacyl-tRNA binding site. In Clostridium beijerinckii (strain ATCC 51743 / NCIMB 8052) (Clostridium acetobutylicum), this protein is Large ribosomal subunit protein bL19.